Consider the following 604-residue polypeptide: Baculoviral IAP repeat-containing protein 3 (604 aa).

Residues 29–96 form a BIR 1 repeat; sequence ELYRMSTYST…RNLYPSCSFI (68 aa). Arginine 130 carries the post-translational modification Omega-N-methylarginine. At serine 140 the chain carries Phosphoserine. BIR repeat units follow at residues 169–235 and 255–322; these read EEDR…CPFV and LAAR…CEYL. Residues cysteine 292, cysteine 295, histidine 312, and cysteine 319 each coordinate Zn(2+). In terms of domain architecture, CARD spans 439 to 529; it reads RESDDVSLIR…MLYKRFFVQQ (91 aa). The RING-type zinc-finger motif lies at 557-592; it reads CKVCMDKEVSIVFIPCGHLVVCRDCAPSLRKCPICR.

This sequence belongs to the IAP family. In terms of assembly, interacts with PRSS25; the interaction inhibits apoptotic suppressor activity. The BIR motifs region interacts with TNF receptor associated factors 1 and 2 (TRAF1 and TRAF2) to form a heteromeric complex, which is then recruited to the tumor necrosis factor receptor 2 (TNFR2). Interaction with TRAF2 is required for ubiquitination of IKBKE, degradation of NFKBIA and activation of NF-kappa-B. Interacts with RIP1, RIP2, RIP3, RIP4 and USP19. Post-translationally, auto-ubiquitinated and degraded by the proteasome in apoptotic cells.

The protein localises to the cytoplasm. The protein resides in the nucleus. It catalyses the reaction S-ubiquitinyl-[E2 ubiquitin-conjugating enzyme]-L-cysteine + [acceptor protein]-L-lysine = [E2 ubiquitin-conjugating enzyme]-L-cysteine + N(6)-ubiquitinyl-[acceptor protein]-L-lysine.. With respect to regulation, USP19 regulates the stability of BIRC3/c-IAP2 by preventing its ubiquitination. Its function is as follows. Multi-functional protein which regulates not only caspases and apoptosis, but also modulates inflammatory signaling and immunity, mitogenic kinase signaling and cell proliferation, as well as cell invasion and metastasis. Acts as an E3 ubiquitin-protein ligase regulating NF-kappa-B signaling and regulates both canonical and non-canonical NF-kappa-B signaling by acting in opposite directions: acts as a positive regulator of the canonical pathway and suppresses constitutive activation of non-canonical NF-kappa-B signaling. The target proteins for its E3 ubiquitin-protein ligase activity include: RIPK1, RIPK2, RIPK3, RIPK4, CASP3, CASP7, CASP8, IKBKE, TRAF1, and BCL10. Acts as an important regulator of innate immune signaling via regulation of Toll-like receptors (TLRs), Nodlike receptors (NLRs) and RIG-I like receptors (RLRs), collectively referred to as pattern recognition receptors (PRRs). Protects cells from spontaneous formation of the ripoptosome, a large multi-protein complex that has the capability to kill cancer cells in a caspase-dependent and caspase-independent manner. Suppresses ripoptosome formation by ubiquitinating RIPK1 and CASP8. The protein is Baculoviral IAP repeat-containing protein 3 (BIRC3) of Canis lupus familiaris (Dog).